Consider the following 214-residue polypeptide: tRNA (guanine-N(7)-)-methyltransferase (214 aa).

Residues glutamate 44, glutamate 69, aspartate 96, and aspartate 118 each coordinate S-adenosyl-L-methionine. Aspartate 118 is a catalytic residue. Substrate is bound by residues lysine 122, aspartate 154, and 191 to 194; that span reads TEYE.

This sequence belongs to the class I-like SAM-binding methyltransferase superfamily. TrmB family.

It carries out the reaction guanosine(46) in tRNA + S-adenosyl-L-methionine = N(7)-methylguanosine(46) in tRNA + S-adenosyl-L-homocysteine. It functions in the pathway tRNA modification; N(7)-methylguanine-tRNA biosynthesis. In terms of biological role, catalyzes the formation of N(7)-methylguanine at position 46 (m7G46) in tRNA. This chain is tRNA (guanine-N(7)-)-methyltransferase, found in Listeria welshimeri serovar 6b (strain ATCC 35897 / DSM 20650 / CCUG 15529 / CIP 8149 / NCTC 11857 / SLCC 5334 / V8).